Here is a 206-residue protein sequence, read N- to C-terminus: Probable thymidylate kinase (206 aa).

An ATP-binding site is contributed by 10–17; that stretch reads GIDGSGKS.

It belongs to the thymidylate kinase family.

It catalyses the reaction dTMP + ATP = dTDP + ADP. In Methanosarcina mazei (strain ATCC BAA-159 / DSM 3647 / Goe1 / Go1 / JCM 11833 / OCM 88) (Methanosarcina frisia), this protein is Probable thymidylate kinase.